Here is a 429-residue protein sequence, read N- to C-terminus: Trigger factor (429 aa).

One can recognise a PPIase FKBP-type domain in the interval 164 to 249 (GDTAVIDFEG…VKEVKTKVLP (86 aa)).

Belongs to the FKBP-type PPIase family. Tig subfamily.

It localises to the cytoplasm. It carries out the reaction [protein]-peptidylproline (omega=180) = [protein]-peptidylproline (omega=0). Functionally, involved in protein export. Acts as a chaperone by maintaining the newly synthesized protein in an open conformation. Functions as a peptidyl-prolyl cis-trans isomerase. The protein is Trigger factor of Lysinibacillus sphaericus (strain C3-41).